Here is a 560-residue protein sequence, read N- to C-terminus: Flagellar M-ring protein (560 aa).

Residues 26–46 form a helical membrane-spanning segment; that stretch reads IPLIVAGSAAVAIVVAMVLWA. The disordered stretch occupies residues 304-372; the sequence is VGAGYPGGVP…TSNYEVDRTI (69 aa). Low complexity predominate over residues 331–353; that stretch reads PPTNQQNAQNTPQTSTSTNSNSA. Residues 354-366 are compositionally biased toward polar residues; it reads GPRSTQRNETSNY. The chain crosses the membrane as a helical span at residues 455 to 475; that stretch reads FIDQLLAAGRWLLVLVVAWIL.

Belongs to the FliF family. In terms of assembly, the basal body constitutes a major portion of the flagellar organelle and consists of four rings (L,P,S, and M) mounted on a central rod. The M ring is integral to the inner membrane of the cell and may be connected to the flagellar rod via the S ring. The S (supramembrane ring) lies just distal to the M ring. The L and P rings lie in the outer membrane and the periplasmic space, respectively.

It is found in the cell inner membrane. The protein localises to the bacterial flagellum basal body. In terms of biological role, the M ring may be actively involved in energy transduction. The sequence is that of Flagellar M-ring protein (fliF) from Salmonella typhimurium (strain LT2 / SGSC1412 / ATCC 700720).